We begin with the raw amino-acid sequence, 210 residues long: Guanylate kinase (210 aa).

Residues 6–186 (GVILVLSSPS…TADRISNILR (181 aa)) enclose the Guanylate kinase-like domain. 13 to 20 (SPSGCGKT) contributes to the ATP binding site.

This sequence belongs to the guanylate kinase family.

The protein resides in the cytoplasm. It carries out the reaction GMP + ATP = GDP + ADP. Its function is as follows. Essential for recycling GMP and indirectly, cGMP. The polypeptide is Guanylate kinase (Anaplasma phagocytophilum (strain HZ)).